The sequence spans 210 residues: Ribosomal RNA small subunit methyltransferase G (210 aa).

Residues L78, 124–125 (IE), and R138 each bind S-adenosyl-L-methionine.

The protein belongs to the methyltransferase superfamily. RNA methyltransferase RsmG family.

It localises to the cytoplasm. The catalysed reaction is guanosine(527) in 16S rRNA + S-adenosyl-L-methionine = N(7)-methylguanosine(527) in 16S rRNA + S-adenosyl-L-homocysteine. Its function is as follows. Specifically methylates the N7 position of guanine in position 527 of 16S rRNA. The polypeptide is Ribosomal RNA small subunit methyltransferase G (Bordetella bronchiseptica (strain ATCC BAA-588 / NCTC 13252 / RB50) (Alcaligenes bronchisepticus)).